The sequence spans 600 residues: MTTPESSATSSVKIYFRLLSYVRPYVGIFLLSILGFVIFASTQPMLAGILKYFVDGLSNPEAVLFPNVPYLRELQLLQAVPLLIVLIAAWQGLGSFLGNYFLAKVSLGLVHDLRVELFNKLLVLPNRYFDTTNSGHLISRITFNVTMVTGAATDAIKVVIREGLTVVFLFIYLLMMNWKLTLVMLAILPLIAVMVSSASKKFRKQSKKIQVAMGDVTHVASETIQGYRVVRSFGGEAYEQNRFAEASDSNTRKQLRMTKTGAIYTPMLQLVIYSAMAVLMFLVLFLRGDATAGDLVAYITAAGLLPKPIRQLSEVSSTIQKGVAGAESIFEQLDVEEEVDTGTIELDRVSGHLEVKNLSFFYPQTERQVLNDISFSAAPGQMIALVGRSGSGKSTLANLIPRFYGHEMGNILLDGVEINDYRLRNLRKHIAQVNQNVTLFNDSIANNIAYGDLAGAPRADIEAAAADAYAKEFIDQLPQGFDTQVGENGVLLSGGQRQRLAIARALLKNAPLLILDEATSALDTESERHIQAALDHVMKGRTTLVIAHRLSTIEKADMILVMDAGKIVERGTHTELLAQNGYYARLHAMGLDEPAPAGAV.

The next 4 helical transmembrane spans lie at 26–46, 82–102, 167–187, and 266–286; these read VGIFLLSILGFVIFASTQPML, LLIVLIAAWQGLGSFLGNYFL, VFLFIYLLMMNWKLTLVMLAI, and PMLQLVIYSAMAVLMFLVLFL. The region spanning 30–321 is the ABC transmembrane type-1 domain; the sequence is LLSILGFVIF…LSEVSSTIQK (292 aa). In terms of domain architecture, ABC transporter spans 353 to 589; sequence LEVKNLSFFY…NGYYARLHAM (237 aa). 387–394 lines the ATP pocket; it reads GRSGSGKS.

This sequence belongs to the ABC transporter superfamily. Lipid exporter (TC 3.A.1.106) family. Homodimer.

Its subcellular location is the cell inner membrane. The enzyme catalyses ATP + H2O + lipid A-core oligosaccharideSide 1 = ADP + phosphate + lipid A-core oligosaccharideSide 2.. Its function is as follows. Involved in lipopolysaccharide (LPS) biosynthesis. Translocates lipid A-core from the inner to the outer leaflet of the inner membrane. Transmembrane domains (TMD) form a pore in the inner membrane and the ATP-binding domain (NBD) is responsible for energy generation. In Pseudomonas syringae pv. tomato (strain ATCC BAA-871 / DC3000), this protein is ATP-dependent lipid A-core flippase.